We begin with the raw amino-acid sequence, 130 residues long: Anti-adapter protein IraD (130 aa).

Belongs to the GpW/Gp25 family. IraD subfamily. In terms of assembly, interacts with RssB.

The protein localises to the cytoplasm. In terms of biological role, inhibits RpoS proteolysis by regulating RssB activity, thereby increasing the stability of the sigma stress factor RpoS during oxidative stress. Its effect on RpoS stability is due to its interaction with RssB, which probably blocks the interaction of RssB with RpoS, and the consequent delivery of the RssB-RpoS complex to the ClpXP protein degradation pathway. The polypeptide is Anti-adapter protein IraD (Escherichia coli O45:K1 (strain S88 / ExPEC)).